A 240-amino-acid chain; its full sequence is MTDPHTARTIVGIVGNVISFGLFCAPIPTMVKIWKMKSVSEFKPDPYVATVLNCMMWTFYGLPFVQPDSLLVITINGTGLFMELVYVTIFFVFATSPVRRKITIAMVIEVIFMAVVIFCTMYFLHTTKQRSMLIGILCIVFNVIMYAAPLTVMKLVIKTKSVKYMPFFLSLANFMNGVVWVIYACLKFDPYILIPNGLGSLSGIIQLIIYITYYKTTNWNDDDEDKEKRYSNAGIELGQA.

Topologically, residues 1–9 (MTDPHTART) are extracellular. A helical membrane pass occupies residues 10 to 30 (IVGIVGNVISFGLFCAPIPTM). Residues 10–95 (IVGIVGNVIS…YVTIFFVFAT (86 aa)) form the MtN3/slv 1 domain. The Cytoplasmic segment spans residues 31–45 (VKIWKMKSVSEFKPD). The helical transmembrane segment at 46-66 (PYVATVLNCMMWTFYGLPFVQ) threads the bilayer. Residues 67–72 (PDSLLV) are Extracellular-facing. Residues 73 to 93 (ITINGTGLFMELVYVTIFFVF) form a helical membrane-spanning segment. The Cytoplasmic segment spans residues 94-103 (ATSPVRRKIT). Residues 104–124 (IAMVIEVIFMAVVIFCTMYFL) form a helical membrane-spanning segment. The Extracellular portion of the chain corresponds to 125–131 (HTTKQRS). The helical transmembrane segment at 132-152 (MLIGILCIVFNVIMYAAPLTV) threads the bilayer. In terms of domain architecture, MtN3/slv 2 spans 133–217 (LIGILCIVFN…IIYITYYKTT (85 aa)). Topologically, residues 153–165 (MKLVIKTKSVKYM) are cytoplasmic. Residues 166–186 (PFFLSLANFMNGVVWVIYACL) form a helical membrane-spanning segment. The Extracellular segment spans residues 187–190 (KFDP). A helical transmembrane segment spans residues 191 to 211 (YILIPNGLGSLSGIIQLIIYI). Over 212–240 (TYYKTTNWNDDDEDKEKRYSNAGIELGQA) the chain is Cytoplasmic.

The protein belongs to the SWEET sugar transporter family. In terms of assembly, forms homooligomers and heterooligomers with SWEET6, SWEET8, SWEET9, SWEET11 and SWEET12.

The protein localises to the cell membrane. Mediates both low-affinity uptake and efflux of sugar across the plasma membrane. May play roles in nurturing the male gametophyte. This chain is Bidirectional sugar transporter SWEET5, found in Arabidopsis thaliana (Mouse-ear cress).